The following is a 248-amino-acid chain: 5'-nucleotidase SurE (248 aa).

Residues aspartate 8, aspartate 9, serine 39, and asparagine 92 each contribute to the a divalent metal cation site.

This sequence belongs to the SurE nucleotidase family. It depends on a divalent metal cation as a cofactor.

The protein resides in the cytoplasm. It carries out the reaction a ribonucleoside 5'-phosphate + H2O = a ribonucleoside + phosphate. Functionally, nucleotidase that shows phosphatase activity on nucleoside 5'-monophosphates. The protein is 5'-nucleotidase SurE of Tolumonas auensis (strain DSM 9187 / NBRC 110442 / TA 4).